The following is a 648-amino-acid chain: Mitotic interactor and substrate of PLK1 (648 aa).

The residue at position 77 (S77) is a Phosphoserine; by CDK1. Residues T149 and T190 each carry the phosphothreonine modification. S220 is modified (phosphoserine). 2 disordered regions span residues 242–383 (VNDP…PEAR) and 430–460 (KATE…GKAT). The residue at position 253 (S253) is a Phosphoserine; by CDK1. Positions 255–281 (ETPKETPIEREIRLAQEREAELREQRG) are enriched in basic and acidic residues. T256 bears the Phosphothreonine; by CDK1 mark. S318 bears the Phosphoserine mark. The segment covering 325 to 339 (MVQETQREEDHRREG) has biased composition (basic and acidic residues). T347 carries the post-translational modification Phosphothreonine; by CDK1. A compositionally biased stretch (polar residues) spans 349–367 (DWPSQDPQPGLQRSLSSDC). A phosphoserine mark is found at S352 and S364. S365 and S439 each carry phosphoserine; by PLK1. The segment covering 440-450 (ESSGRSLSSKQ) has biased composition (polar residues). Residues S507 and S509 each carry the phosphoserine modification. The stretch at 511–534 (DLLEREMESVLRREREVAEERRNA) forms a coiled coil. Residues 539 to 568 (VFSPVPAEDESHEQDSRSSSRASGITGSYS) form a disordered region. At S541 the chain carries Phosphoserine; by CDK1. At S554 the chain carries Phosphoserine; by PLK1. Residues 557–568 (SSRASGITGSYS) show a composition bias toward polar residues. Phosphoserine is present on S644.

It belongs to the MISP family. Associates with F-actin. Interacts with DCTN1; this interaction regulates DCTN1 distribution at the cell cortex. Interacts with PTK2/FAK and MAPRE1. Post-translationally, phosphorylated by CDK1 and PLK1. CDK1 is the priming kinase for PLK1 phosphorylation. Phosphorylation by PLK1 is required for proper spindle orientation at metaphase.

It is found in the cell junction. Its subcellular location is the focal adhesion. The protein localises to the cytoplasm. The protein resides in the cytoskeleton. It localises to the cell cortex. Plays a role in mitotic spindle orientation and mitotic progression. Regulates the distribution of dynactin at the cell cortex in a PLK1-dependent manner, thus stabilizing cortical and astral microtubule attachments required for proper mitotic spindle positioning. May link microtubules to the actin cytoskeleton and focal adhesions. May be required for directed cell migration and centrosome orientation. May also be necessary for proper stacking of the Golgi apparatus. The polypeptide is Mitotic interactor and substrate of PLK1 (Mus musculus (Mouse)).